We begin with the raw amino-acid sequence, 136 residues long: ATP synthase epsilon chain, chloroplastic (136 aa).

This sequence belongs to the ATPase epsilon chain family. F-type ATPases have 2 components, CF(1) - the catalytic core - and CF(0) - the membrane proton channel. CF(1) has five subunits: alpha(3), beta(3), gamma(1), delta(1), epsilon(1). CF(0) has three main subunits: a, b and c.

The protein localises to the plastid. The protein resides in the chloroplast thylakoid membrane. Produces ATP from ADP in the presence of a proton gradient across the membrane. The sequence is that of ATP synthase epsilon chain, chloroplastic from Cucumis sativus (Cucumber).